A 448-amino-acid chain; its full sequence is Exodeoxyribonuclease 7 large subunit (448 aa).

Belongs to the XseA family. As to quaternary structure, heterooligomer composed of large and small subunits.

The protein resides in the cytoplasm. It carries out the reaction Exonucleolytic cleavage in either 5'- to 3'- or 3'- to 5'-direction to yield nucleoside 5'-phosphates.. Functionally, bidirectionally degrades single-stranded DNA into large acid-insoluble oligonucleotides, which are then degraded further into small acid-soluble oligonucleotides. In Nitrosomonas eutropha (strain DSM 101675 / C91 / Nm57), this protein is Exodeoxyribonuclease 7 large subunit.